The sequence spans 121 residues: Prismalin-14 (121 aa).

Residues 1–16 (MRSLLVLLALAACASA) form the signal peptide. Gln17 is subject to Pyrrolidone carboxylic acid. A run of 4 repeats spans residues 48 to 51 (PIYR), 52 to 55 (PIYR), 56 to 59 (PIYY), and 60 to 63 (PQII). The tract at residues 48-63 (PIYRPIYRPIYYPQII) is 4 X 4 AA approximate tandem repeats of P-I-Y-R.

Expressed only at the mantle edge where it is found predominantly in the inner side of the outer mantle fold.

Its function is as follows. Displays inhibitory activity against calcium carbonate precipitation, binds calcium and affects crystallization of calcium carbonate in vitro. May be involved in calcification of the prismatic layer of the shell. This chain is Prismalin-14, found in Pinctada fucata (Akoya pearl oyster).